Here is a 413-residue protein sequence, read N- to C-terminus: Protein cycle (413 aa).

The tract at residues 1–43 (MEVQEFCENMEEIEDENYDEEKSARTSDENRKQNHSEIEKRRR) is disordered. A compositionally biased stretch (acidic residues) spans 8–19 (ENMEEIEDENYD). The segment covering 20 to 41 (EEKSARTSDENRKQNHSEIEKR) has biased composition (basic and acidic residues). The bHLH domain maps to 30-83 (NRKQNHSEIEKRRRDKMNTYINELSSMIPMCFAMQRKLDKLTVLRMAVQHLRGI). Residues 104-175 (DQELKMIILQ…EQLSSLEQCP (72 aa)) form the PAS 1 domain. Residues 219 to 242 (NQIKEESDTSSSSRSSTKRKSRLT) form a disordered region. A PAS 2 domain is found at 297-367 (PASLDNHPNI…ESHKMVMQVP (71 aa)). The PAC domain maps to 372–413 (TQVYRFRCKDNSYIQLQSEWRAFKNPWTSEIDYIIAKNSVFL).

In terms of assembly, efficient DNA binding requires dimerization with another bHLH protein. Forms a heterodimer with Clock in order to activate PER and TIM transcription. Expressed in head and ovary.

It is found in the nucleus. In terms of biological role, putative transcription factor involved in the generation of biological rhythms. Activates cycling transcription of Period (PER) and Timeless (TIM) by binding to the E-box (5'-CACGTG-3') present in their promoters. The chain is Protein cycle (cyc) from Drosophila melanogaster (Fruit fly).